We begin with the raw amino-acid sequence, 1205 residues long: Transcriptional-regulating factor 1 (1205 aa).

Disordered regions lie at residues 201-226 (YQQV…VGQH), 270-317 (YPQP…QRQS), 332-351 (QHLQ…SYHR), 390-500 (PQSH…QTKG), 527-583 (LNGH…PEAE), and 601-629 (PKPS…MSDD). Composition is skewed to low complexity over residues 291 to 317 (QQQQ…QRQS) and 332 to 342 (QHLQEQQQPSM). 3 stretches are compositionally biased toward polar residues: residues 406 to 417 (KTYSSDRQTPAM), 437 to 447 (SEMTRVTSTLP), and 487 to 498 (QSGSPESSSGQT). Phosphoserine is present on serine 490. The C2H2-type 1 zinc finger occupies 512–534 (LTCSICLKEFKSLPALNGHMRSH). The span at 551-579 (APPPQPQPQPQPQQPLPPPPPPPPPPQLP) shows a compositional bias: pro residues. The span at 604 to 613 (SSQGFTNSVA) shows a compositional bias: polar residues. 2 positions are modified to N6-acetyllysine: lysine 639 and lysine 646. Threonine 773 is modified (phosphothreonine). An ELM2 domain is found at 785–876 (PRINIGLRFQ…ATLEMLLLRK (92 aa)). In terms of domain architecture, SANT spans 891-942 (AGSDKWTSLERKLFNKALATYSKDFIFVQKMVKSKTVAQCVEYYYTWKKIMR). Residues 956–975 (DDCMTSEEEEEAEEEEEDPE) show a composition bias toward acidic residues. Disordered stretches follow at residues 956-1016 (DDCM…QQPS) and 1043-1087 (HGGT…GETD). Threonine 960 carries the phosphothreonine modification. The residue at position 961 (serine 961) is a Phosphoserine. The span at 976–990 (EDRKSIKEEESEVAK) shows a compositional bias: basic and acidic residues. Residues 1019–1043 (FICEMPNCGAVFSSRQALNGHARIH) form a C2H2-type 2 zinc finger. Residues 1072-1086 (SVKSSPSHSTTSGET) show a composition bias toward low complexity. The C2H2-type 3 zinc-finger motif lies at 1092–1114 (FPCKECGKVFFKIKSRNAHMKTH).

As to quaternary structure, interacts with CREBBP and EP300. Interacts with DNTTIP1 and DNTT. As to expression, highly expressed in kidney, lung and brain. In the brain, expression was seen in the basal ganglia, hippocampus, piriform cortex, cerebral cortex, ventromedial nucleus of the hypothalamus and the dorsal and superior central nuclei of the raphe.

The protein localises to the nucleus. Its function is as follows. Binds DNA and activates transcription of CYP11A1. Interaction with CREBBP and EP300 results in a synergistic transcriptional activation of CYP11A1. The polypeptide is Transcriptional-regulating factor 1 (Trerf1) (Mus musculus (Mouse)).